The sequence spans 260 residues: Type III pantothenate kinase (260 aa).

6-13 (DSGNTNIV) serves as a coordination point for ATP. A substrate-binding site is contributed by 108-111 (GADR). The Proton acceptor role is filled by aspartate 110. Aspartate 130 contributes to the K(+) binding site. Position 133 (threonine 133) interacts with ATP. Substrate is bound at residue threonine 185.

Belongs to the type III pantothenate kinase family. In terms of assembly, homodimer. Requires NH4(+) as cofactor. The cofactor is K(+).

The protein localises to the cytoplasm. The enzyme catalyses (R)-pantothenate + ATP = (R)-4'-phosphopantothenate + ADP + H(+). It functions in the pathway cofactor biosynthesis; coenzyme A biosynthesis; CoA from (R)-pantothenate: step 1/5. Its function is as follows. Catalyzes the phosphorylation of pantothenate (Pan), the first step in CoA biosynthesis. The protein is Type III pantothenate kinase of Paramagnetospirillum magneticum (strain ATCC 700264 / AMB-1) (Magnetospirillum magneticum).